The chain runs to 1302 residues: 1-phosphatidylinositol 4,5-bisphosphate phosphodiesterase gamma-1 (1302 aa).

Position 2 is an N-acetylalanine (alanine 2). Residues 27-142 enclose the PH 1 domain; the sequence is RSLEVGTVMT…WIKGLTWLME (116 aa). In terms of domain architecture, EF-hand spans 152–187; sequence QIERWLRKQFYSVDRNREDRISAKDLKNMLSQVNYR. The Ca(2+) site is built by aspartate 165, asparagine 167, glutamate 169, arginine 171, and aspartate 176. Residues 320-464 form the PI-PLC X-box domain; it reads DTMNNPLSHY…LRRKILIKHK (145 aa). Catalysis depends on residues histidine 335 and histidine 380. The 35-residue stretch at 489–523 folds into the PH 2; first part domain; the sequence is SIKNGILYLEDPVNHEWYPHYFVLTSSKIYYSEET. Tyrosine 506 carries the post-translational modification Phosphotyrosine. The segment at 522 to 545 is disordered; it reads ETSSDQGNEDEEEPKEASSSTELH. SH2 domains lie at 550–657 and 668–756; these read WFHG…SEPV and WYHA…RYPI. The residue at position 771 (tyrosine 771) is a Phosphotyrosine; by SYK. Position 775 is a phosphotyrosine (tyrosine 775). Tyrosine 783 is modified (phosphotyrosine; by ITK, SYK and TXK). In terms of domain architecture, SH3 spans 791–851; the sequence is TFKCAVKALF…PSNYVEEMIN (61 aa). The PH 2; second part domain maps to 895–931; that stretch reads FVFSISMPSVAQWSLDVAADSQEELQDWVKKIREVAQ. In terms of domain architecture, PI-PLC Y-box spans 953–1070; it reads LSELVVYCRP…GYVLQPSTMR (118 aa). Residue tyrosine 977 is modified to Phosphotyrosine. The C2 domain maps to 1071–1194; the sequence is DEAFDPFDKS…TGYRAVPLKN (124 aa). A phosphoserine mark is found at serine 1221, serine 1227, serine 1233, and serine 1248. The residue at position 1253 (tyrosine 1253) is a Phosphotyrosine. At serine 1263 the chain carries Phosphoserine.

In terms of assembly, interacts (via SH2 domain) with FGFR1, FGFR2, FGFR3 and FGFR4 (phosphorylated). Interacts with RALGPS1. Interacts (via SH2 domains) with VIL1 (phosphorylated at C-terminus tyrosine phosphorylation sites). Interacts (via SH2 domain) with RET. Interacts with AGAP2 via its SH3 domain. Interacts with LAT (phosphorylated) upon TCR activation. Interacts (via SH3 domain) with the Pro-rich domain of TNK1. Associates with BLNK, VAV1, GRB2 and NCK1 in a B-cell antigen receptor-dependent fashion. Interacts with CBLB in activated T-cells; which inhibits phosphorylation. Interacts with SHB. Interacts (via SH3 domain) with the Arg/Gly-rich-flanked Pro-rich domains of KHDRBS1/SAM68. This interaction is selectively regulated by arginine methylation of KHDRBS1/SAM68. Interacts with INPP5D/SHIP1, THEMIS and CLNK. Interacts with FLT4 and KIT. Interacts with AXL. Interacts with SYK; activates PLCG1. Interacts with FLT1 (tyrosine-phosphorylated). Interacts (via SH2 domain) with PDGFRA and PDGFRB (tyrosine phosphorylated). Interacts with PIP5K1C. Interacts with NTRK1 and NTRK2 (phosphorylated upon ligand-binding). Interacts with TESPA1. Interacts with GRB2, LAT and THEMIS upon TCR activation in thymocytes; the association is weaker in the absence of TESPA1. Interacts (via C-terminal proline-rich domain (PRD)) with PLCG1 (via SH3 domain); this interaction leads to guanine nucleotide exchange from PlCG1 to DNM1 and enhances DNM1-dependent endocytosis. The cofactor is Ca(2+). In terms of processing, tyrosine phosphorylated in response to signaling via activated FLT3, KIT and PDGFRA. Tyrosine phosphorylated by activated FGFR1, FGFR2, FGFR3 and FGFR4. Tyrosine phosphorylated by activated FLT1 and KDR. Tyrosine phosphorylated by activated PDGFRB. The receptor-mediated activation of PLCG1 involves its phosphorylation by tyrosine kinases in response to ligation of a variety of growth factor receptors and immune system receptors. For instance, SYK phosphorylates and activates PLCG1 in response to ligation of the B-cell receptor. Phosphorylated by ITK and TXK on Tyr-783 upon TCR activation in T-cells. May be dephosphorylated by PTPRJ. Ubiquitinated by CBLB in activated T-cells.

It is found in the cell projection. The protein localises to the lamellipodium. It localises to the ruffle. It catalyses the reaction a 1,2-diacyl-sn-glycero-3-phospho-(1D-myo-inositol-4,5-bisphosphate) + H2O = 1D-myo-inositol 1,4,5-trisphosphate + a 1,2-diacyl-sn-glycerol + H(+). It carries out the reaction a 1,2-diacyl-sn-glycero-3-phospho-(1D-myo-inositol) + H2O = 1D-myo-inositol 1-phosphate + a 1,2-diacyl-sn-glycerol + H(+). Activated by phosphorylation on tyrosine residues. Mediates the production of the second messenger molecules diacylglycerol (DAG) and inositol 1,4,5-trisphosphate (IP3). Plays an important role in the regulation of intracellular signaling cascades. Becomes activated in response to ligand-mediated activation of receptor-type tyrosine kinases, such as PDGFRA, PDGFRB, EGFR, FGFR1, FGFR2, FGFR3 and FGFR4. Plays a role in actin reorganization and cell migration. Guanine nucleotide exchange factor that binds the GTPase DNM1 and catalyzes the dissociation of GDP, allowing a GTP molecule to bind in its place, therefore enhancing DNM1-dependent endocytosis. This Mus musculus (Mouse) protein is 1-phosphatidylinositol 4,5-bisphosphate phosphodiesterase gamma-1.